A 574-amino-acid polypeptide reads, in one-letter code: Transmembrane glycoprotein NMB (574 aa).

Residues 1-22 form the signal peptide; the sequence is MESLCGVLGFLLLAAGLPLQAA. Residues 23–502 are Extracellular-facing; it reads KRFRDVLGHE…DPDSPLRAVN (480 aa). Residues Asn93, Asn134, Asn200, Asn249, Asn275, Asn296, Asn300, Asn306, and Asn312 are each glycosylated (N-linked (GlcNAc...) asparagine). The PKD domain occupies 250 to 338; that stretch reads LSDEIFLRDL…STPPPPSTPP (89 aa). The interval 320–353 is disordered; sequence PGPCPPPSPSTPPPPSTPPSPPPSPLPTLSTPSP. Residues 321 to 345 show a composition bias toward pro residues; that stretch reads GPCPPPSPSTPPPPSTPPSPPPSPL. 2 N-linked (GlcNAc...) asparagine glycosylation sites follow: Asn463 and Asn471. A helical membrane pass occupies residues 503–523; sequence GVLISIGCLAVLVTMVTILLY. The Cytoplasmic segment spans residues 524–574; that stretch reads KKHKAYKPIGNCPRNTVKGKGLSVLLSHAKAPFFRGDQEKDPLLQDKPRTL. At Ser546 the chain carries Phosphoserine. Residues 558–560 carry the Cell attachment site motif; the sequence is RGD.

The protein belongs to the PMEL/NMB family. As to expression, may be up-regulated in bone metastatic breast cancer cells.

It is found in the cell membrane. It localises to the melanosome membrane. The protein resides in the early endosome membrane. In terms of biological role, could be a melanogenic enzyme. The polypeptide is Transmembrane glycoprotein NMB (Gpnmb) (Mus musculus (Mouse)).